A 387-amino-acid chain; its full sequence is Peroxisomal membrane protein LPX1 (387 aa).

Residues 385-387 (QKL) form a peroxisomal targeting signal type 1 region.

It localises to the peroxisome matrix. Functionally, has acyl esterase, lipase and phospholipase A activity. This chain is Peroxisomal membrane protein LPX1 (LPX1), found in Saccharomyces cerevisiae (strain ATCC 204508 / S288c) (Baker's yeast).